Consider the following 352-residue polypeptide: MSESELLGPRAYGEACGQALLKACAEDFQVDEVLDIPLSGQGEHLWLWVEKRGLNTEEAARRLARAAGMPLKAISYAGLKDRQALTRQWFSLHLPGKADPDLVAAEDDSLRILERVRHSRKLQRGAHAANGFKLRLTRLAADRPALDARLEQLRRQGVPNYFGLQRFGHDGGNLAEARAFAVRRELPAQRNLRSRLLSAARSYLFNRVLAERVAVGDWNRAQPGDLLAFTDSRSFFPAGVEECADPRLALLDLHPTGPLWGAGGSPAGAATKVLEDAVGRCEAPLGDWLGEAGMLHERRILRLPIDRLAWHYPAIDILQLEFVLPAGCFATVVVRELVDLWPAGLMDTSCVF.

Catalysis depends on D81, which acts as the Nucleophile. One can recognise a TRUD domain in the interval 157–303 (GVPNYFGLQR…MLHERRILRL (147 aa)).

The protein belongs to the pseudouridine synthase TruD family.

It catalyses the reaction uridine(13) in tRNA = pseudouridine(13) in tRNA. Functionally, responsible for synthesis of pseudouridine from uracil-13 in transfer RNAs. This chain is tRNA pseudouridine synthase D, found in Azotobacter vinelandii (strain DJ / ATCC BAA-1303).